The sequence spans 136 residues: Small ribosomal subunit protein uS8 (136 aa).

Belongs to the universal ribosomal protein uS8 family. Part of the 30S ribosomal subunit. Contacts proteins S5 and S12.

Its function is as follows. One of the primary rRNA binding proteins, it binds directly to 16S rRNA central domain where it helps coordinate assembly of the platform of the 30S subunit. The sequence is that of Small ribosomal subunit protein uS8 from Persephonella marina (strain DSM 14350 / EX-H1).